A 403-amino-acid polypeptide reads, in one-letter code: RNA-binding motif, single-stranded-interacting protein 1 (403 aa).

Residues 30–56 are disordered; that stretch reads PAHPMAPPSPSTTSSNNNSSSSSNSGW. Residues 40 to 54 are compositionally biased toward low complexity; sequence STTSSNNNSSSSSNS. 2 RRM domains span residues 62-135 and 141-226; these read TNLY…MAKQ and TNLY…FADG. Threonine 208 is modified (phosphothreonine).

It is found in the nucleus. Single-stranded DNA binding protein that interacts with the region upstream of the C-myc gene. Binds specifically to the DNA sequence motif 5'-[AT]CT[AT][AT]T-3'. Probably has a role in DNA replication. The chain is RNA-binding motif, single-stranded-interacting protein 1 (RBMS1) from Bos taurus (Bovine).